Reading from the N-terminus, the 169-residue chain is Ferric-chelate reductase (NAD(P)H) (169 aa).

Y7 lines the NADP(+) pocket. FMN contacts are provided by residues 27–31 (QIANT), 45–52 (CLNKENDT), 82–84 (RKS), and K89. NADP(+) is bound by residues H126 and 147 to 154 (YADYHLMK).

It belongs to the non-flavoprotein flavin reductase family. As to quaternary structure, homodimer. It depends on FMN as a cofactor. The cofactor is FAD.

It carries out the reaction 2 a Fe(II)-siderophore + NAD(+) + H(+) = 2 a Fe(III)-siderophore + NADH. The enzyme catalyses 2 a Fe(II)-siderophore + NADP(+) + H(+) = 2 a Fe(III)-siderophore + NADPH. Functionally, catalyzes the reduction of bound ferric iron (Fe(3+)) in a variety of iron chelators (siderophores) using NAD(P)H as the electron donor, resulting in the release of Fe(2+). Not active with uncomplexed Fe(3+). Also reduces FMN and FAD, but not riboflavin. This is Ferric-chelate reductase (NAD(P)H) from Archaeoglobus fulgidus (strain ATCC 49558 / DSM 4304 / JCM 9628 / NBRC 100126 / VC-16).